The following is a 293-amino-acid chain: Diaminopimelate epimerase (293 aa).

2 residues coordinate substrate: N11 and N78. C87 acts as the Proton donor in catalysis. Substrate contacts are provided by residues 88–89, N166, N202, and 220–221; these read GN and ER. The active-site Proton acceptor is C229. 230–231 serves as a coordination point for substrate; sequence GT.

The protein belongs to the diaminopimelate epimerase family. Homodimer.

The protein resides in the cytoplasm. The enzyme catalyses (2S,6S)-2,6-diaminopimelate = meso-2,6-diaminopimelate. It participates in amino-acid biosynthesis; L-lysine biosynthesis via DAP pathway; DL-2,6-diaminopimelate from LL-2,6-diaminopimelate: step 1/1. In terms of biological role, catalyzes the stereoinversion of LL-2,6-diaminopimelate (L,L-DAP) to meso-diaminopimelate (meso-DAP), a precursor of L-lysine and an essential component of the bacterial peptidoglycan. The polypeptide is Diaminopimelate epimerase (Mycobacterium sp. (strain JLS)).